A 299-amino-acid chain; its full sequence is Ribosomal protein L11 methyltransferase (299 aa).

The S-adenosyl-L-methionine site is built by Thr152, Gly172, Asp194, and Asn234.

It belongs to the methyltransferase superfamily. PrmA family.

The protein localises to the cytoplasm. It catalyses the reaction L-lysyl-[protein] + 3 S-adenosyl-L-methionine = N(6),N(6),N(6)-trimethyl-L-lysyl-[protein] + 3 S-adenosyl-L-homocysteine + 3 H(+). Its function is as follows. Methylates ribosomal protein L11. In Geobacter metallireducens (strain ATCC 53774 / DSM 7210 / GS-15), this protein is Ribosomal protein L11 methyltransferase.